We begin with the raw amino-acid sequence, 722 residues long: Polyribonucleotide nucleotidyltransferase (722 aa).

Mg(2+)-binding residues include D495 and D501. The 60-residue stretch at 562-621 (PRLLSFRIDPELIGTVIGPGGRTIKGITERTNTKIDIEDGGIVTIASHDGAAAEEAQRII) folds into the KH domain. Residues 631-699 (GEIFPGSITR…NRGRINLTLR (69 aa)) form the S1 motif domain. Residues 700–722 (GVSQNGGMSNYPEPTPTPVAPLT) are disordered. Pro residues predominate over residues 712-722 (EPTPTPVAPLT).

It belongs to the polyribonucleotide nucleotidyltransferase family. The cofactor is Mg(2+).

It is found in the cytoplasm. The catalysed reaction is RNA(n+1) + phosphate = RNA(n) + a ribonucleoside 5'-diphosphate. Functionally, involved in mRNA degradation. Catalyzes the phosphorolysis of single-stranded polyribonucleotides processively in the 3'- to 5'-direction. This chain is Polyribonucleotide nucleotidyltransferase, found in Prochlorococcus marinus (strain NATL2A).